We begin with the raw amino-acid sequence, 259 residues long: Protein CDI (259 aa).

Residues 236–259 are a coiled coil; that stretch reads FADLWLNEMEEYNKENKKEADNAK.

In terms of tissue distribution, mostly expressed in pollen grains and pollen tubes, and, at low levels, in seedlings, roots, stems, leaves, flowers and siliques.

The protein localises to the cytoplasm. The protein resides in the cytosol. In terms of biological role, probable nucleotide-diphospho-sugar transferase required for pollen germination and tube growth. This Arabidopsis thaliana (Mouse-ear cress) protein is Protein CDI.